The primary structure comprises 309 residues: MAGFTLLPSRLLAFPSRALPRRLHHHHAKLILRCKMSSSSSSLTQSITLPSQPNEPVLVSATAGISSSDFRDAIDSSLFRNWLRNLESESGILADGSMTLKQVLIQGVDMFGKRIGFLKFKADIFDKETGQKVPGIVFARGPAVAVLILLESDGETYAVLTEQVRVPTGKIVLELPAGMLDDDKGDFVGTAVREVEEEIGIKLKKEDMVDLTAFLDPSTGYRIFPSPGGCDEEMSVFLYRGQVEKETIRQLQGKETGLREHGEFIKVRLIPYRELWRKTADAKVLMSIGLYEMAQREGLVSSQRLKPNS.

A chloroplast-targeting transit peptide spans 1-60; it reads MAGFTLLPSRLLAFPSRALPRRLHHHHAKLILRCKMSSSSSSLTQSITLPSQPNEPVLVS. A Nudix hydrolase domain is found at 139–292; the sequence is ARGPAVAVLI…KVLMSIGLYE (154 aa). Residues 179–200 carry the Nudix box motif; that stretch reads MLDDDKGDFVGTAVREVEEEIG. Mg(2+) is bound by residues Glu-194 and Glu-198.

The protein belongs to the Nudix hydrolase family. In terms of assembly, homodimer. The cofactor is Mg(2+). Mn(2+) is required as a cofactor. Expressed in roots, leaves, stems and inflorescences.

It is found in the plastid. The protein resides in the chloroplast. The catalysed reaction is ADP-sugar + H2O = AMP + alpha-D-aldose 1-phosphate.. Functionally, mediates the hydrolysis of some nucleoside diphosphate derivatives. Can use ADP-glucose, ADP-mannose and ADP-ribose as substrates. Regulates the intracellular ADP-glucose levels linked to starch biosynthesis. The sequence is that of Nudix hydrolase 14, chloroplastic (NUDT14) from Arabidopsis thaliana (Mouse-ear cress).